The following is a 275-amino-acid chain: Transcriptional coregulator psa-3 (275 aa).

Residues 91–161 enclose the MEIS N-terminal domain; that stretch reads TDDIKRLFQS…RRTVCHEALV (71 aa). A disordered region spans residues 239–275; the sequence is QLPPNFLKPSNEKSPEKSEEEKSQKPSSSPKSPSLSD. Residues 248–262 are compositionally biased toward basic and acidic residues; it reads SNEKSPEKSEEEKSQ. Residues 263–275 are compositionally biased toward low complexity; sequence KPSSSPKSPSLSD.

As to quaternary structure, interacts with homeobox protein ceh-20; the interaction is direct, facilitates nuclear localization of ceh-20 and may stabilize interaction of a ceh-20-nob-1 complex with DNA.

The protein localises to the nucleus. Functionally, probable transcription coregulator. Required for asymmetric cell divisions of the T hypodermal cells, and cell fate determination, in concert with homeobox proteins nob-1 and ceh-20. Acts downstream of the Wnt signaling pathway, and of ceh-20 and nob-1. This chain is Transcriptional coregulator psa-3, found in Caenorhabditis elegans.